The primary structure comprises 164 residues: NADH-quinone oxidoreductase subunit I 1 (164 aa).

4Fe-4S ferredoxin-type domains are found at residues L54–G84 and V95–N124. Residues C64, C67, C70, C74, C104, C107, C110, and C114 each coordinate [4Fe-4S] cluster.

The protein belongs to the complex I 23 kDa subunit family. As to quaternary structure, NDH-1 is composed of 14 different subunits. Subunits NuoA, H, J, K, L, M, N constitute the membrane sector of the complex. The cofactor is [4Fe-4S] cluster.

It is found in the cell inner membrane. The catalysed reaction is a quinone + NADH + 5 H(+)(in) = a quinol + NAD(+) + 4 H(+)(out). Functionally, NDH-1 shuttles electrons from NADH, via FMN and iron-sulfur (Fe-S) centers, to quinones in the respiratory chain. The immediate electron acceptor for the enzyme in this species is believed to be ubiquinone. Couples the redox reaction to proton translocation (for every two electrons transferred, four hydrogen ions are translocated across the cytoplasmic membrane), and thus conserves the redox energy in a proton gradient. This Rhizobium meliloti (strain 1021) (Ensifer meliloti) protein is NADH-quinone oxidoreductase subunit I 1.